The chain runs to 188 residues: Ribosome-recycling factor (188 aa).

The protein belongs to the RRF family.

Its subcellular location is the cytoplasm. Functionally, responsible for the release of ribosomes from messenger RNA at the termination of protein biosynthesis. May increase the efficiency of translation by recycling ribosomes from one round of translation to another. The polypeptide is Ribosome-recycling factor (Lawsonia intracellularis (strain PHE/MN1-00)).